The following is a 380-amino-acid chain: S-adenosylmethionine synthase (380 aa).

His15 contributes to the ATP binding site. Asp17 serves as a coordination point for Mg(2+). Position 43 (Glu43) interacts with K(+). 2 residues coordinate L-methionine: Glu56 and Gln99. A flexible loop region spans residues 99-109 (QSPDIAMGIDN). Residues 164–166 (DAK), 230–231 (RF), Asp239, 245–246 (RK), and Lys266 each bind ATP. Asp239 contributes to the L-methionine binding site. Position 270 (Lys270) interacts with L-methionine.

The protein belongs to the AdoMet synthase family. As to quaternary structure, homotetramer; dimer of dimers. It depends on Mg(2+) as a cofactor. K(+) is required as a cofactor.

The protein resides in the cytoplasm. It catalyses the reaction L-methionine + ATP + H2O = S-adenosyl-L-methionine + phosphate + diphosphate. It participates in amino-acid biosynthesis; S-adenosyl-L-methionine biosynthesis; S-adenosyl-L-methionine from L-methionine: step 1/1. In terms of biological role, catalyzes the formation of S-adenosylmethionine (AdoMet) from methionine and ATP. The overall synthetic reaction is composed of two sequential steps, AdoMet formation and the subsequent tripolyphosphate hydrolysis which occurs prior to release of AdoMet from the enzyme. The chain is S-adenosylmethionine synthase from Rickettsia prowazekii (strain Madrid E).